We begin with the raw amino-acid sequence, 389 residues long: tRNA(Met) cytidine acetate ligase (389 aa).

Residues 8–21, G97, N153, and R176 each bind ATP; that span reads IAEF…HEYL.

The protein belongs to the TmcAL family.

It is found in the cytoplasm. The catalysed reaction is cytidine(34) in elongator tRNA(Met) + acetate + ATP = N(4)-acetylcytidine(34) in elongator tRNA(Met) + AMP + diphosphate. Catalyzes the formation of N(4)-acetylcytidine (ac(4)C) at the wobble position of elongator tRNA(Met), using acetate and ATP as substrates. First activates an acetate ion to form acetyladenylate (Ac-AMP) and then transfers the acetyl group to tRNA to form ac(4)C34. In Lactococcus lactis subsp. lactis (strain IL1403) (Streptococcus lactis), this protein is tRNA(Met) cytidine acetate ligase.